A 1259-amino-acid chain; its full sequence is MGGGNLHSLPPENASVSASYAVTVGNTKLSDAPVLFFVYCHKAFRAQLVELRRFATDAAEADSFSGDLAVELSRKFEFLKLVYKYHSAAEDEVIFLALDKRVKNIVSNYSLEHAGTDDLFTSIFHWLHVLEEEIGSRSDVLREVILCIGTIQSSICQHMLKEERQVFPLLIEKFSFREQASLVWQFICSVPVMVLEDFLPWMISHLSHEEKIEVENCIKDVAPNEDSLQQVISSWLLDDSQSSCGTPTEIMKGVQYVNVSKSLKKSPESHPSSGCFQRFWEWSKKSLSIPNVGRSPIHGLRLFQNAIEKDLRDIQEGLCQAKFQTLILDLDVLMARLNFLADVLVSYSNAFKKFFHPVLEEMTARRSSTAKQFNIDDCLENFQRLLYKSADDKTKTDNFLLQLQEELESLIIQVTKQFAIQRTEVFPIISKNCNHEMQKQLLYTSIHVLPLGLLKCVILWFSAHLSEEESQSILHFLSLEDSSPKKSFPRLLLQWLRFGYSGKTSVERFWKQLDVMFKVRCSCQKEHTEEASGSFSNQTQLQLCKVSKDVYPRKKDKSSTCFMSMDLAVGDMYETPYSSRMNQQMTFSGKLKPPLHLPDFFGEKNMDDPMIMDVKPIDLLFFFHKAMKMDLDYLVCGSTRLAADFRFLAEFQQRFHMIKFLYQIHSDAEDEIAFPALEAKGQLKNISHSFSIDHELETKHFDKVSFILNEMSELNMLVSTINTTAADHDRKMKYERLCLSLREICKSMHKLLSEHIQHEETELWGLFRNCFSIEEQEKIIGCMLGRISGEILQDMIPWLMESLTSDEQLAAMSLWRQATRKTMFVEWLTEWYNGHVLQEEAGEANNDPFGDSDPLEIVWKYLFEASADGEKGSMRSSLLKLPKTNFTGIMNQPPPNYKVEVGKKEEKDLERSESKKICRGSNQEGDKEQTDKMSQKVSQFGPSKKYEQLLTMSEEELVVVIKKISCDSSLDPQKKDYIKQNLLMSRWNISQRTYNLEPSSLSSNMETVHGQHPSYRDPHSLIFGCNHYKRNCKLLAPCCDKLFTCIRCHDEEADHSVDRKQITKMMCMKCLLIQPIGANCSNTSCKSSMGKYFCKICKLYDDERKIYHCPYCNLCRVGKGLGIDYFHCMKCNACMSRTLVEHVCREKCLEDNCPICHEYIFTSSSPVKALPCGHLMHSTCFQEYTCSHYTCPVCSKSLGDMQVYFKMLDALLAEEKMPDEYSNKTQVILCNDCGRKGNAPYHWLYHKCTTCGSYNSRLL.

A helical membrane pass occupies residues 441-461; the sequence is LLYTSIHVLPLGLLKCVILWF. Composition is skewed to basic and acidic residues over residues 904–916 and 924–934; these read KEEK…ESKK and EGDKEQTDKMS. The tract at residues 904–938 is disordered; it reads KEEKDLERSESKKICRGSNQEGDKEQTDKMSQKVS. The segment at 1018-1087 adopts a CHY-type zinc-finger fold; the sequence is PHSLIFGCNH…ANCSNTSCKS (70 aa). Zn(2+) contacts are provided by C1025, H1027, C1038, C1039, C1045, C1048, H1049, H1055, C1067, C1070, C1080, C1085, C1094, C1097, H1108, C1109, C1112, C1115, H1127, C1128, C1131, C1134, H1142, and C1144. The CTCHY-type zinc finger occupies 1089-1152; it reads MGKYFCKICK…VCREKCLEDN (64 aa). Residues 1153–1195 form an RING-type; atypical zinc finger; the sequence is CPICHEYIFTSSSPVKALPCGHLMHSTCFQEYTCSHYTCPVCS.

As to quaternary structure, binds zinc and iron ions.

The protein resides in the membrane. Its subcellular location is the nucleus. Its pathway is protein modification; protein ubiquitination. In terms of biological role, probable E3 ubiquitin-protein ligase that may regulate the response to iron deficiency and thus contributes to iron homeostasis. The polypeptide is Zinc finger protein BRUTUS-like At1g74770 (Arabidopsis thaliana (Mouse-ear cress)).